The primary structure comprises 487 residues: Glycogen synthase (487 aa).

Lys-15 contacts ADP-alpha-D-glucose.

It belongs to the glycosyltransferase 1 family. Bacterial/plant glycogen synthase subfamily.

It catalyses the reaction [(1-&gt;4)-alpha-D-glucosyl](n) + ADP-alpha-D-glucose = [(1-&gt;4)-alpha-D-glucosyl](n+1) + ADP + H(+). The protein operates within glycan biosynthesis; glycogen biosynthesis. Functionally, synthesizes alpha-1,4-glucan chains using ADP-glucose. In Leptothrix cholodnii (strain ATCC 51168 / LMG 8142 / SP-6) (Leptothrix discophora (strain SP-6)), this protein is Glycogen synthase.